Here is a 257-residue protein sequence, read N- to C-terminus: Type III pantothenate kinase (257 aa).

ATP is bound at residue 5–12; it reads DIGNTNIK. 107-110 lines the substrate pocket; it reads GSDR. Residue D109 is the Proton acceptor of the active site. Residue T133 participates in ATP binding.

It belongs to the type III pantothenate kinase family. Homodimer. NH4(+) is required as a cofactor. It depends on K(+) as a cofactor.

It localises to the cytoplasm. It catalyses the reaction (R)-pantothenate + ATP = (R)-4'-phosphopantothenate + ADP + H(+). It functions in the pathway cofactor biosynthesis; coenzyme A biosynthesis; CoA from (R)-pantothenate: step 1/5. Its function is as follows. Catalyzes the phosphorylation of pantothenate (Pan), the first step in CoA biosynthesis. In Ehrlichia ruminantium (strain Gardel), this protein is Type III pantothenate kinase.